A 451-amino-acid polypeptide reads, in one-letter code: Scaffold protein ILK (451 aa).

Methionine 1 carries the post-translational modification N-acetylmethionine. 5 ANK repeats span residues 2 to 30 (DDIFTQCREGNAVAVRLWLDNTENDLNQG), 31 to 63 (DDHGFSPLHWACREGRSAVVEMLIMRGARINVM), 64 to 96 (NRGDDTPLHLAASHGHRDIVQKLLQYKADINAV), 97 to 129 (NEHGNVPLHYACFWGQDQVAEDLVANGALVSIC), and 130 to 174 (NKYG…GTTR). The interaction with LIMS1 stretch occupies residues 33 to 139 (HGFSPLHWAC…NKYGEMPMDK (107 aa)). Residue threonine 173 is modified to Phosphothreonine. The PH-like; mediates interaction with TGFB1I1 stretch occupies residues 180 to 212 (GTLNKHSGIDFKQLNFLAKLNENHSGELWKGRW). Position 186 is a phosphoserine (serine 186). A Protein kinase domain is found at 193–445 (LNFLAKLNEN…PKFDMIVPIL (253 aa)). Residues asparagine 200, asparagine 202, histidine 203, and serine 204 each coordinate ATP. Serine 246 is subject to Phosphoserine. Positions 270, 272, and 279 each coordinate ATP. Residue aspartate 339 coordinates Mg(2+). Lysine 341 provides a ligand contact to ATP. The short motif at 363 to 371 (KKPEDTNRR) is the Nuclear localization signal element. N6-acetyllysine is present on lysine 425.

This sequence belongs to the protein kinase superfamily. TKL Ser/Thr protein kinase family. As to quaternary structure, component of the heterotrimeric IPP (ILK-PINCH-PARVIN) complex composed of ILK, LIMS1/PINCH and PARVA; the complex binds to F-actin via the C-terminal tail of LIMS1 and the N-terminal region of PARVA, promoting F-actin filament bundling. Formation of the IPP complex is dependent on protein kinase C and precedes integrin-mediated cell adhesion and spreading. ILK also interacts with LIMS2/PINCH2 and with PARVB and PARVG which may substitute for LIMS1 and PARVA in the IPP complex; PARVA and PARVB compete for the same binding site. Interaction with PARVG promotes the establishment of cell polarity required for leukocyte migration. Interacts with the cytoplasmic domain of integrin ITGB1 and may also interact with integrins ITGB2, ITGB3 and/or ITGB5. Interacts probably also with TGFB1I1. Interacts (via ANK repeats) with EPHA1 (via SAM domain); stimulated by EFNA1 but independent of the kinase activity of EPHA1. Interacts with FERMT2. Interacts with LIMD2; leading to activate the protein kinase activity. Interacts with PXN/PAXILLIN (via LD motif 4). Interacts with CCDC25 (via cytoplasmic region); initiating the ILK-PARVB cascade to induce cytoskeleton rearrangement and directional migration of cells. Interacts with IQGAP1; the interaction is required for localization of IQGAP1 to the cell cortex. Phosphorylation by PAK1 modulates ILK subcellular location by promoting its nuclear export.

The protein localises to the cell junction. The protein resides in the focal adhesion. Its subcellular location is the cell membrane. It is found in the cell projection. It localises to the lamellipodium. The protein localises to the cytoplasm. The protein resides in the myofibril. Its subcellular location is the sarcomere. It is found in the nucleus. It localises to the cytoskeleton. The protein localises to the microtubule organizing center. The protein resides in the centrosome. Its subcellular location is the cell cortex. In terms of biological role, scaffold protein which mediates protein-protein interactions during a range of cellular events including focal adhesion assembly, cell adhesion and cell migration. Regulates integrin-mediated signal transduction by contributing to inside-out integrin activation. Recruits PARVA and LIMS1/PITCH to form the heterotrimeric IPP (ILK-PINCH-PARVIN) complex which binds to F-actin via the C-terminal tail of LIMS1 and the N-terminal region of PARVA, promoting F-actin filament bundling, a process required to generate force for actin cytoskeleton reorganization and subsequent dynamic cell adhesion events such as cell spreading and migration. Binding to PARVA promotes effective assembly of ILK into focal adhesions while PARVA-bound ILK can simultaneously engage integrin-beta cytoplasmic tails to mediate cell adhesion. Plays a role with PARVG in promoting the cell adhesion and spreading of leukocytes. Acts as an upstream effector of both AKT1/PKB and GSK3. Mediates trafficking of caveolae to the cell surface in an ITGB1-dependent manner by promoting the recruitment of IQGAP1 to the cell cortex which cooperates with its effector DIAPH1 to locally stabilize microtubules and allow stable insertion of caveolae into the plasma membrane. Required for the maintenance of mitotic spindle integrity by promoting phosphorylation of TACC3 by AURKA. Associates with chromatin and may act as a negative regulator of transcription when located in the nucleus. The chain is Scaffold protein ILK from Cavia porcellus (Guinea pig).